The chain runs to 565 residues: Beta-hexosaminidase subunit beta (565 aa).

The signal sequence occupies residues 1–13 (MIVLLLLISYCFA). A glycan (N-linked (GlcNAc...) asparagine) is linked at asparagine 71. The active-site Proton donor is glutamate 347.

The protein belongs to the glycosyl hydrolase 20 family. In terms of assembly, heterodimer of one alpha subunit and one beta subunit. In terms of processing, glycosylated.

It localises to the cytoplasmic granule. The protein localises to the secreted. It catalyses the reaction Hydrolysis of terminal non-reducing N-acetyl-D-hexosamine residues in N-acetyl-beta-D-hexosaminides.. Hydrolyzes the non-reducing end N-acetyl-D-hexosamine and/or sulfated N-acetyl-D-hexosamine of glycoconjugates. May contribute to amoebic pathogenicity and may be involved in the destruction of extracellular matrix components. The chain is Beta-hexosaminidase subunit beta from Entamoeba histolytica (strain ATCC 30459 / HM-1:IMSS / ABRM).